The chain runs to 217 residues: Adenylate kinase (217 aa).

10–15 (GAGKGT) serves as a coordination point for ATP. Positions 30–59 (STGEILRAAVKSKTPMGVKAKEYMDQGALV) are NMP. AMP is bound by residues threonine 31, arginine 36, 57 to 59 (ALV), 85 to 88 (GFPR), and glutamine 92. The interval 126–163 (GRRVCRACGRAFHVKFDPPLVDGVCDACGGELYQRDDD) is LID. Arginine 127 contributes to the ATP binding site. Residues cysteine 130, cysteine 133, cysteine 150, and cysteine 153 each contribute to the Zn(2+) site. Positions 160 and 171 each coordinate AMP. Position 199 (glutamate 199) interacts with ATP.

This sequence belongs to the adenylate kinase family. In terms of assembly, monomer.

The protein resides in the cytoplasm. It catalyses the reaction AMP + ATP = 2 ADP. It participates in purine metabolism; AMP biosynthesis via salvage pathway; AMP from ADP: step 1/1. Catalyzes the reversible transfer of the terminal phosphate group between ATP and AMP. Plays an important role in cellular energy homeostasis and in adenine nucleotide metabolism. This is Adenylate kinase from Geobacter sulfurreducens (strain ATCC 51573 / DSM 12127 / PCA).